Consider the following 362-residue polypeptide: Ferrochelatase (362 aa).

Fe cation-binding residues include His212 and Glu294.

The protein belongs to the ferrochelatase family.

Its subcellular location is the cytoplasm. It catalyses the reaction heme b + 2 H(+) = protoporphyrin IX + Fe(2+). It functions in the pathway porphyrin-containing compound metabolism; protoheme biosynthesis; protoheme from protoporphyrin-IX: step 1/1. Functionally, catalyzes the ferrous insertion into protoporphyrin IX. This chain is Ferrochelatase, found in Leptospira biflexa.